Reading from the N-terminus, the 87-residue chain is Small ribosomal subunit protein bS20 (87 aa).

Basic residues predominate over residues 1–19 (MANHKSALKRHRQSIKRNL). The tract at residues 1-22 (MANHKSALKRHRQSIKRNLRNN) is disordered.

Belongs to the bacterial ribosomal protein bS20 family.

Binds directly to 16S ribosomal RNA. The polypeptide is Small ribosomal subunit protein bS20 (Maridesulfovibrio salexigens (strain ATCC 14822 / DSM 2638 / NCIMB 8403 / VKM B-1763) (Desulfovibrio salexigens)).